Here is a 176-residue protein sequence, read N- to C-terminus: Shikimate kinase (176 aa).

14–19 (GAGKST) is an ATP binding site. Position 18 (Ser18) interacts with Mg(2+). Residues Asp36, Arg60, and Gly83 each coordinate substrate. Arg121 contributes to the ATP binding site. Arg140 is a binding site for substrate.

It belongs to the shikimate kinase family. As to quaternary structure, monomer. Requires Mg(2+) as cofactor.

It is found in the cytoplasm. The catalysed reaction is shikimate + ATP = 3-phosphoshikimate + ADP + H(+). It participates in metabolic intermediate biosynthesis; chorismate biosynthesis; chorismate from D-erythrose 4-phosphate and phosphoenolpyruvate: step 5/7. Its function is as follows. Catalyzes the specific phosphorylation of the 3-hydroxyl group of shikimic acid using ATP as a cosubstrate. This is Shikimate kinase from Francisella tularensis subsp. tularensis (strain FSC 198).